A 417-amino-acid chain; its full sequence is Xylulose 5-phosphate/phosphate translocator, chloroplastic (417 aa).

A chloroplast-targeting transit peptide spans 1–82 (MISLNLSPSL…GFSRKPRSIA (82 aa)). A disordered region spans residues 66-102 (TNPESSSGFSRKPRSIAAVGSSDSNPDEKSDLGEAEK). Alanine 83 bears the N-acetylalanine mark. Positions 91 to 102 (PDEKSDLGEAEK) are enriched in basic and acidic residues. A run of 9 helical transmembrane segments spans residues 109 to 129 (TLQLGIVFGLWYFQNIVFNIF), 141 to 161 (WLLASFQLFAGSIWMLVLWSF), 173 to 193 (FIIALLGPALFHTIGHISACV), 198 to 218 (VAVSFTHVIKSAEPVFSVIFS), 225 to 245 (YPLAVWLSILPIVMGCSLAAV), 247 to 267 (EVSFNLGGLSGAMISNVGFVL), 287 to 307 (LYGCISILSLLYLFPVAIFVE), 318 to 338 (AIASVGTPSTFYFWVLLSGVF), and 384 to 404 (LNALGSAIAIFGTFLYSQATA). An EamA domain is found at 127–243 (NIFNKKALNV…LPIVMGCSLA (117 aa)).

Belongs to the TPT transporter family. TPT (TC 2.A.7.9) subfamily. As to expression, widely expressed.

It localises to the plastid. It is found in the chloroplast membrane. Sugar phosphate/phosphate translocator that transports inorganic phosphate, triose phosphate, 3-phosphoglycerate, xylulose 5-phosphate (Xul-5-P) and to a lesser extent ribulose 5-phosphate. Does not transport ribose 5-phosphate or hexose phosphates. Provides cytosolic Xul-5-P to the chloroplast, where it is used as an intermediate in the plastidic pentose phosphate pathways. The sequence is that of Xylulose 5-phosphate/phosphate translocator, chloroplastic (XPT) from Arabidopsis thaliana (Mouse-ear cress).